The sequence spans 346 residues: Uroporphyrinogen decarboxylase (346 aa).

Residues 26-30 (RQAGR), Asp76, Tyr153, Ser208, and His323 contribute to the substrate site.

Belongs to the uroporphyrinogen decarboxylase family. Homodimer.

It localises to the cytoplasm. The catalysed reaction is uroporphyrinogen III + 4 H(+) = coproporphyrinogen III + 4 CO2. The protein operates within porphyrin-containing compound metabolism; protoporphyrin-IX biosynthesis; coproporphyrinogen-III from 5-aminolevulinate: step 4/4. Functionally, catalyzes the decarboxylation of four acetate groups of uroporphyrinogen-III to yield coproporphyrinogen-III. The sequence is that of Uroporphyrinogen decarboxylase from Prochlorococcus marinus (strain AS9601).